The primary structure comprises 347 residues: Phosphoribosylformylglycinamidine cyclo-ligase (347 aa).

Belongs to the AIR synthase family.

Its subcellular location is the cytoplasm. The catalysed reaction is 2-formamido-N(1)-(5-O-phospho-beta-D-ribosyl)acetamidine + ATP = 5-amino-1-(5-phospho-beta-D-ribosyl)imidazole + ADP + phosphate + H(+). It functions in the pathway purine metabolism; IMP biosynthesis via de novo pathway; 5-amino-1-(5-phospho-D-ribosyl)imidazole from N(2)-formyl-N(1)-(5-phospho-D-ribosyl)glycinamide: step 2/2. This chain is Phosphoribosylformylglycinamidine cyclo-ligase, found in Yersinia pestis.